The primary structure comprises 382 residues: Anhydro-N-acetylmuramic acid kinase (382 aa).

9 to 16 (GTSLDGID) serves as a coordination point for ATP.

Belongs to the anhydro-N-acetylmuramic acid kinase family.

The catalysed reaction is 1,6-anhydro-N-acetyl-beta-muramate + ATP + H2O = N-acetyl-D-muramate 6-phosphate + ADP + H(+). The protein operates within amino-sugar metabolism; 1,6-anhydro-N-acetylmuramate degradation. It participates in cell wall biogenesis; peptidoglycan recycling. Its function is as follows. Catalyzes the specific phosphorylation of 1,6-anhydro-N-acetylmuramic acid (anhMurNAc) with the simultaneous cleavage of the 1,6-anhydro ring, generating MurNAc-6-P. Is required for the utilization of anhMurNAc either imported from the medium or derived from its own cell wall murein, and thus plays a role in cell wall recycling. The protein is Anhydro-N-acetylmuramic acid kinase of Bacillus cereus (strain Q1).